The primary structure comprises 371 residues: N-methyl-L-tryptophan oxidase (371 aa).

4–34 contributes to the FAD binding site; the sequence is DLIVIGSGSVGSAAGYYASQAGLNVLMIDSA. S-8alpha-FAD cysteine is present on C307.

This sequence belongs to the MSOX/MTOX family. MTOX subfamily. As to quaternary structure, monomer. It depends on FAD as a cofactor.

The enzyme catalyses N(alpha)-methyl-L-tryptophan + O2 + H2O = L-tryptophan + formaldehyde + H2O2. Functionally, catalyzes the oxidative demethylation of N-methyl-L-tryptophan. The polypeptide is N-methyl-L-tryptophan oxidase (Yersinia pseudotuberculosis serotype O:1b (strain IP 31758)).